The primary structure comprises 445 residues: UPF0210 protein SPT_0285 (445 aa).

It belongs to the UPF0210 family. In terms of assembly, homodimer.

This chain is UPF0210 protein SPT_0285, found in Streptococcus pneumoniae (strain Taiwan19F-14).